Reading from the N-terminus, the 1744-residue chain is MEGYLASVSLGEESTQMWSLNKRLEAYLSRVKALEEENELLRKEIHSLRSSKSERCWKKKHHEEMMKLRDALDDGHREMVQAEMVRDSIYEEIEFVKQRCLEEKQAREDAKKELSESKKLLEEETRAQIWLKERLGQLEAELEDILRDHEEEKALMEEEIASFSQRLENFRVAPVAFKPVEVDDYARKLSEIWQGAVEEYKSEVSVLEAGLSESKENLRKVLEENKQNRLLLQSLDKELVSLKMRKEALEDLLSKQWQEQKEEEEKLQRKAEALEQEKQDLRGQIAEVLEDRQQLMHLKMSLSLEVATYRSLLEAESTRIYTDYRGSYTFNDSMLEHNNVRRRQSEDTRKTVSKDHRQSYSKKQIGDKNELQRPSLNNFSTVKSSAVPVRTSPVTKEFQKVSSVLQSQGLKYTKAPQVKEVQTVSTVKSNLETHTFSGDAFRRAQVETRKTDEQVIKKDALGLNDLNKNTGFKEEKDIQKPGFMDHVVSKSVSSTEHKVPEIDPLESALKSLEEDLSSVSSTFNAGQSSNLEAIKDVLGEPICLENLQNEIAFEKESPGTNAAADPIEEVISESVSYQTVHFEKQELSNLLEIENTHENHVQDATQAFNSCEQDGHDRASTLENNEPDVQQYIRTLESNEIKESKIPSDNTEEAEIISKSRKVFLENEYIPVSKDDLTEFTSHLENDSESSQSFDSKLFENKSTEDQLITNLKSNTQENIFQSNQEHLENLEFDSVVPDTVKFMYPQENNLLEEENVYGDGELVQMATDENIINQSSDQLLLSDHSHHEETKTSESIAVEHNRMESEHAEVDKSSEIPVEISENVSVEEIIHEISDVEEDTKQAFEDERVGEQINQNNQESTVDLDGSVYSQEENSQLEEDEVSISEQIEKDFEINEQECLKSDQIREAFDTEEVDHQVVDFMQEQSFEREVGQLNNIKQEVDYLQNYDEDSFQNNDEPQELESCDLQEQKIKLEEENQLSENEGNQNFGGNDIEEFSQQGYDTDEICQETIGNQVSAQLLCESDINQDKLSMEDEEEQNNPETEDNIGLEQESDQENTRSNEGTKFSQEECDVVFKPEDMSDKSEYSGQQEDLDKQVTDFSLNEQANNDLLEKEEVILHHADDQRSVNDEITIDEKLSERIIDNELATVDVNESLAANKEQVDLFTDEYAVDDNVGMQDDDSGQYQTKEDLFVDGNNIIEKIEIQQTSLLNQEICERVDNVDEDISGEAKNESVEMNDVVDLVPEAKVTGDEQISPLQDEKLNLETMEDTKDNDGQLCLEKENETEYIEVTDSPQFATDLSHDAGRELTVDQNSANLQFCENPTKTLIAHHIEYETVADSDLESTEEQVQETERIPFKPEDSKMENENSESEESVDSQEISLNSHKSEEFEISKDYQLEQTLPDVTPLPNLEDEFEDLTEQPDVHEEHQNNDDSGASTFITSVDEDKEREVRESVSKDEESNEEEFGDVLSVDKTSQVEVTTLSGLAQEPSYLGDNEESEDSMENAEILNENPSNDIVDFMVSQMTETKIIIAEQVTEQTEVTLQFDDAPNKLTENLNAREKETYDYESNEENIEFTNENQSASPANDIVDENQSEDSVISDNEGTTSSYEDLPNATSISHVVALEESNISTTEQSSTDTKRMTYEGYEITSLQNVEDNAQETEKEFPSGVPLGQEDSRSEDEELDDEGSEFSFGVNDEKANGEHKDVGEDDETEDMLNGHSQTGYSKIVLTSKKALRWKRMF.

The tract at residues 1-12 (MEGYLASVSLGE) is head. The segment at 8 to 48 (VSLGEESTQMWSLNKRLEAYLSRVKALEEENELLRKEIHSL) is coil 1A. In terms of domain architecture, IF rod spans 13–320 (ESTQMWSLNK…SLLEAESTRI (308 aa)). Residues 49–60 (RSSKSERCWKKK) are linker 1. A coil 1B region spans residues 61–156 (HHEEMMKLRD…RDHEEEKALM (96 aa)). The linker 12 stretch occupies residues 157–179 (EEEIASFSQRLENFRVAPVAFKP). Residues 180–193 (VEVDDYARKLSEIW) form a coil 2A region. Residues 194-199 (QGAVEE) are linker 2. A coil 2B region spans residues 200-314 (YKSEVSVLEA…EVATYRSLLE (115 aa)). The tract at residues 315 to 1744 (AESTRIYTDY…KKALRWKRMF (1430 aa)) is tail. Composition is skewed to basic and acidic residues over residues 341–371 (RRRQ…KNEL) and 785–815 (HSHH…DKSS). Disordered stretches follow at residues 341-372 (RRRQ…NELQ), 785-816 (HSHH…KSSE), 976-996 (EENQ…DIEE), 1032-1093 (SMED…QQED), 1340-1470 (DSDL…FGDV), 1485-1506 (SGLA…SMEN), and 1560-1722 (AREK…LNGH). Over residues 980–990 (LSENEGNQNFG) the composition is skewed to polar residues. Residues 1034-1056 (EDEEEQNNPETEDNIGLEQESDQ) are compositionally biased toward acidic residues. A compositionally biased stretch (basic and acidic residues) spans 1074-1086 (VVFKPEDMSDKSE). The segment covering 1340–1351 (DSDLESTEEQVQ) has biased composition (acidic residues). Residues 1352-1367 (ETERIPFKPEDSKMEN) are compositionally biased toward basic and acidic residues. Residues 1368–1377 (ENSESEESVD) are compositionally biased toward acidic residues. Positions 1386 to 1398 (HKSEEFEISKDYQ) are enriched in basic and acidic residues. Residues 1412-1421 (LEDEFEDLTE) are compositionally biased toward acidic residues. The span at 1423–1432 (PDVHEEHQNN) shows a compositional bias: basic and acidic residues. The segment covering 1433–1442 (DDSGASTFIT) has biased composition (polar residues). Residues 1445-1460 (DEDKEREVRESVSKDE) are compositionally biased toward basic and acidic residues. Over residues 1496 to 1505 (DNEESEDSME) the composition is skewed to acidic residues. Polar residues-rich tracts occupy residues 1576–1586 (EFTNENQSASP), 1597–1621 (EDSV…TSIS), and 1629–1639 (SNISTTEQSST). A compositionally biased stretch (acidic residues) spans 1680–1691 (RSEDEELDDEGS). The segment covering 1698–1709 (NDEKANGEHKDV) has biased composition (basic and acidic residues).

Belongs to the intermediate filament family. As to expression, growth cones of embryonic vertebrate neurons.

This is Tanabin from Xenopus laevis (African clawed frog).